Reading from the N-terminus, the 194-residue chain is UPF0301 protein CBU_2093 (194 aa).

This sequence belongs to the UPF0301 (AlgH) family.

This Coxiella burnetii (strain RSA 493 / Nine Mile phase I) protein is UPF0301 protein CBU_2093.